The primary structure comprises 382 residues: Mannitol-1-phosphate 5-dehydrogenase (382 aa).

3–14 (ALHFGAGNIGRG) is an NAD(+) binding site.

It belongs to the mannitol dehydrogenase family.

It catalyses the reaction D-mannitol 1-phosphate + NAD(+) = beta-D-fructose 6-phosphate + NADH + H(+). In Salmonella newport (strain SL254), this protein is Mannitol-1-phosphate 5-dehydrogenase.